A 941-amino-acid chain; its full sequence is Isoleucine--tRNA ligase (941 aa).

Positions 59 to 69 (PYANGNIHIGH) match the 'HIGH' region motif. Glutamate 562 contributes to the L-isoleucyl-5'-AMP binding site. The 'KMSKS' region motif lies at 603 to 607 (KMSKS). Lysine 606 contributes to the ATP binding site. 4 residues coordinate Zn(2+): cysteine 904, cysteine 907, cysteine 924, and cysteine 927.

The protein belongs to the class-I aminoacyl-tRNA synthetase family. IleS type 1 subfamily. In terms of assembly, monomer. Requires Zn(2+) as cofactor.

The protein resides in the cytoplasm. The catalysed reaction is tRNA(Ile) + L-isoleucine + ATP = L-isoleucyl-tRNA(Ile) + AMP + diphosphate. Functionally, catalyzes the attachment of isoleucine to tRNA(Ile). As IleRS can inadvertently accommodate and process structurally similar amino acids such as valine, to avoid such errors it has two additional distinct tRNA(Ile)-dependent editing activities. One activity is designated as 'pretransfer' editing and involves the hydrolysis of activated Val-AMP. The other activity is designated 'posttransfer' editing and involves deacylation of mischarged Val-tRNA(Ile). The chain is Isoleucine--tRNA ligase from Haemophilus influenzae (strain PittEE).